The sequence spans 87 residues: Small ribosomal subunit protein uS15 (87 aa).

The protein belongs to the universal ribosomal protein uS15 family. As to quaternary structure, part of the 30S ribosomal subunit. Forms a bridge to the 50S subunit in the 70S ribosome, contacting the 23S rRNA.

Its function is as follows. One of the primary rRNA binding proteins, it binds directly to 16S rRNA where it helps nucleate assembly of the platform of the 30S subunit by binding and bridging several RNA helices of the 16S rRNA. Functionally, forms an intersubunit bridge (bridge B4) with the 23S rRNA of the 50S subunit in the ribosome. The chain is Small ribosomal subunit protein uS15 from Dehalococcoides mccartyi (strain ATCC BAA-2266 / KCTC 15142 / 195) (Dehalococcoides ethenogenes (strain 195)).